We begin with the raw amino-acid sequence, 892 residues long: DNA replication licensing factor mcm6 (892 aa).

S96 and S98 each carry phosphoserine. The region spanning 426–633 is the MCM domain; that stretch reads IYSRLTNSLA…VDRHLAKHIV (208 aa). 476 to 483 is an ATP binding site; the sequence is GDPSTSKS. Residues 608–611 carry the Arginine finger motif; it reads SRFD. The segment covering 748–758 has biased composition (acidic residues); sequence EDDAEAQELEN. Residues 748–774 are disordered; sequence EDDAEAQELENDNTNTTNGNDNVSSEE. A compositionally biased stretch (low complexity) spans 759–769; that stretch reads DNTNTTNGNDN.

The protein belongs to the MCM family. Component of the mcm2-7 complex. The complex forms a toroidal hexameric ring with the proposed subunit order mcm2-mcm6-mcm4-mcm7-mcm3-mcm5. The heterodimers of mcm4/mcm6 and mcm3/mcm5 interact with mcm2 and mcm7. Interacts with sld3.

The protein resides in the nucleus. The catalysed reaction is ATP + H2O = ADP + phosphate + H(+). Its function is as follows. Acts as a component of the mcm2-7 complex (mcm complex) which is the putative replicative helicase essential for 'once per cell cycle' DNA replication initiation and elongation in eukaryotic cells. The active ATPase sites in the mcm2-7 ring are formed through the interaction surfaces of two neighboring subunits such that a critical structure of a conserved arginine finger motif is provided in trans relative to the ATP-binding site of the Walker A box of the adjacent subunit. The six ATPase active sites, however, are likely to contribute differentially to the complex helicase activity. The chain is DNA replication licensing factor mcm6 (mcm6) from Schizosaccharomyces pombe (strain 972 / ATCC 24843) (Fission yeast).